Reading from the N-terminus, the 336-residue chain is Ferredoxin--NADP reductase (336 aa).

FAD is bound by residues aspartate 37, glutamine 45, tyrosine 50, valine 90, phenylalanine 124, aspartate 286, and threonine 327.

It belongs to the ferredoxin--NADP reductase type 2 family. Homodimer. FAD is required as a cofactor.

The enzyme catalyses 2 reduced [2Fe-2S]-[ferredoxin] + NADP(+) + H(+) = 2 oxidized [2Fe-2S]-[ferredoxin] + NADPH. In Enterococcus faecalis (strain ATCC 700802 / V583), this protein is Ferredoxin--NADP reductase.